The chain runs to 96 residues: Small ribosomal subunit protein bS6 (96 aa).

Belongs to the bacterial ribosomal protein bS6 family.

Its function is as follows. Binds together with bS18 to 16S ribosomal RNA. In Bacillus mycoides (strain KBAB4) (Bacillus weihenstephanensis), this protein is Small ribosomal subunit protein bS6.